Consider the following 298-residue polypeptide: 4-hydroxy-tetrahydrodipicolinate synthase (298 aa).

Position 51 (Thr51) interacts with pyruvate. Catalysis depends on Tyr140, which acts as the Proton donor/acceptor. Lys168 serves as the catalytic Schiff-base intermediate with substrate. Ile210 is a binding site for pyruvate.

The protein belongs to the DapA family. As to quaternary structure, homotetramer; dimer of dimers.

Its subcellular location is the cytoplasm. It carries out the reaction L-aspartate 4-semialdehyde + pyruvate = (2S,4S)-4-hydroxy-2,3,4,5-tetrahydrodipicolinate + H2O + H(+). It functions in the pathway amino-acid biosynthesis; L-lysine biosynthesis via DAP pathway; (S)-tetrahydrodipicolinate from L-aspartate: step 3/4. Functionally, catalyzes the condensation of (S)-aspartate-beta-semialdehyde [(S)-ASA] and pyruvate to 4-hydroxy-tetrahydrodipicolinate (HTPA). The polypeptide is 4-hydroxy-tetrahydrodipicolinate synthase (Acidovorax sp. (strain JS42)).